Here is a 707-residue protein sequence, read N- to C-terminus: G protein-coupled receptor kinase 2 (707 aa).

Residues 1–190 (MADLEAVLAD…ELNMQLTMND (190 aa)) are N-terminal. Residues 54–175 (KFDKIFNQKL…LESDKFTRFC (122 aa)) enclose the RGS domain. The Protein kinase domain occupies 191-455 (FSVHRIIGRG…PTEVKEHPFF (265 aa)). ATP contacts are provided by residues 197-205 (IGRGGFGEV) and lysine 220. Residue aspartate 318 is the Proton acceptor of the active site. The 68-residue stretch at 456-523 (KDVDWQTVYL…VISERWQNEI (68 aa)) folds into the AGC-kinase C-terminal domain. Positions 558–658 (DVIVHGYIKK…WHTSLRTAHK (101 aa)) constitute a PH domain.

It belongs to the protein kinase superfamily. AGC Ser/Thr protein kinase family. GPRK subfamily. Interacts with amx-2; the interaction promotes phosphorylation of amx-2. As to expression, expressed in many neurons in the adult including the ASH neurons and other sensory neurons, many interneurons, and motor neurons of the ventral nerve cord. Expressed broadly in head neurons and is detected in several head acetylcholine neurons including the AVA, AVB, AVD and AVE premotor interneurons, the SMD and RMD head motor neurons, and the AIN, AIY, SIA, SIB and SAA interneurons. Expressed in HSN motor neurons and VC4/VC5 motor neurons. Also expressed in vulval muscle cells. Expressed in premotor and RIS interneurons. Expressed in ciliated neurons such as AWA, AWB, AWC, ASH and ADF olfactory and nociceptive neurons, and in chemosensory ASH neurons. Expressed in RMG neurons and AVK interneurons.

The enzyme catalyses [G-protein-coupled receptor] + ATP = [G-protein-coupled receptor]-phosphate + ADP + H(+). Its function is as follows. Specifically phosphorylates the activated forms of G protein-coupled receptors. Required in adult sensory neurons for chemotaxis. Plays a role in the ASH sensory neurons in the chemotaxis response to NaCl where it is likely to modulate the strength of the NaCl avoidance response which occurs at high NaCl concentrations. Required in the HSN motor neurons for normal egg laying by promoting phosphorylation of amine oxidase amx-2 which inhibits amx-2 activity, preventing metabolism of serotonin. Acts in head acetylcholine neurons to positively regulate locomotion. Inactivates dopamine receptor dop-3 which leads to inactivation of guanine nucleotide-binding protein G(o) subunit goa-1 and activation of the unc-77/nca-1 and nca-2 ion channel proteins. Acts as a positive regulator of swimming by inactivating two dopamine receptors, dop-3 in the premotor interneurons that negatively controls early swimming through the nca ion channel, and dop-1 in the RIS neuron that inhibits late-stage swimming via the signaling of FMRFamide-like neuropeptide flp-11. Controls movement quiescence by negatively regulating multiple targets including egl-4 in ciliated neurons, the level of ligands of the neuropeptide receptor npr-1 in RMG neurons, and the secretion of flp-1 from AVK interneurons. The sequence is that of G protein-coupled receptor kinase 2 (grk-2) from Caenorhabditis elegans.